The chain runs to 246 residues: Probable phosphatase AHA_1344 (246 aa).

Zn(2+)-binding residues include histidine 8, histidine 10, histidine 16, histidine 41, glutamate 74, histidine 102, histidine 132, aspartate 193, and histidine 195.

It belongs to the PHP family. Zn(2+) is required as a cofactor.

The chain is Probable phosphatase AHA_1344 from Aeromonas hydrophila subsp. hydrophila (strain ATCC 7966 / DSM 30187 / BCRC 13018 / CCUG 14551 / JCM 1027 / KCTC 2358 / NCIMB 9240 / NCTC 8049).